The primary structure comprises 501 residues: Probable leucine aminopeptidase 2 (501 aa).

An N-terminal signal peptide occupies residues 1-18 (MVTMKLLYLTSFASLAVA). Residues 119–216 (SPSVNATAPL…ADGQALIQMI (98 aa)) form the PA domain. Asn-123 and Asn-233 each carry an N-linked (GlcNAc...) asparagine glycan. 2 residues coordinate Zn(2+): His-257 and Asp-269. The active-site Proton acceptor is Glu-301. Position 302 (Glu-302) interacts with Zn(2+). Asn-316 is a glycosylation site (N-linked (GlcNAc...) asparagine). Asp-330 provides a ligand contact to Zn(2+). Asn-350 carries N-linked (GlcNAc...) asparagine glycosylation. Position 428 (His-428) interacts with Zn(2+). N-linked (GlcNAc...) asparagine glycans are attached at residues Asn-433 and Asn-467. The disordered stretch occupies residues 480–501 (AMKRTPHTHTGGTGCYKDRVEQ).

Belongs to the peptidase M28 family. M28A subfamily. Monomer. Zn(2+) serves as cofactor.

Its subcellular location is the secreted. Its function is as follows. Extracellular aminopeptidase that releases a wide variety of amino acids from natural peptides and contributes to pathogenicity. This chain is Probable leucine aminopeptidase 2 (lap2), found in Aspergillus fumigatus (strain ATCC MYA-4609 / CBS 101355 / FGSC A1100 / Af293) (Neosartorya fumigata).